The primary structure comprises 946 residues: Sorting nexin-14 (946 aa).

Helical transmembrane passes span 24-44 and 49-69; these read ICRQ…ASLL and IHIL…YCSL. A PXA domain is found at 130–304; sequence SSKVDASLSE…LLIIFIDDSP (175 aa). Positions 336–468 constitute an RGS domain; it reads ELKQIREQQD…CHSDEYFRQL (133 aa). A Phosphoserine modification is found at S548. One can recognise a PX domain in the interval 570 to 690; it reads PYVDFFEDPS…DFLSPNGGET (121 aa).

The protein belongs to the sorting nexin family. As to expression, widely expressed both in fetal and adult tissues.

It is found in the lysosome membrane. It localises to the late endosome membrane. The protein resides in the cell projection. Its subcellular location is the dendrite. Functionally, plays a role in maintaining normal neuronal excitability and synaptic transmission. May be involved in several stages of intracellular trafficking. Required for autophagosome clearance, possibly by mediating the fusion of lysosomes with autophagosomes. Binds phosphatidylinositol 3,5-bisphosphate (PtdIns(3,5)P2), a key component of late endosomes/lysosomes. Does not bind phosphatidylinositol 3-phosphate (PtdIns(3P)). This is Sorting nexin-14 (SNX14) from Homo sapiens (Human).